A 423-amino-acid chain; its full sequence is UPF0229 protein PSPPH_0628 (423 aa).

Residues 65–110 (HHGRGGKQTVVHPGNKEFTTGEHIARPQGGGGGKGPGKAGNSGEGM) are disordered. Residues 92 to 107 (QGGGGGKGPGKAGNSG) show a composition bias toward gly residues.

It belongs to the UPF0229 family.

The protein is UPF0229 protein PSPPH_0628 of Pseudomonas savastanoi pv. phaseolicola (strain 1448A / Race 6) (Pseudomonas syringae pv. phaseolicola (strain 1448A / Race 6)).